Consider the following 475-residue polypeptide: Ribulose bisphosphate carboxylase large chain (475 aa).

Positions 1 to 2 (MS) are excised as a propeptide. Position 3 is an N-acetylproline (proline 3). Lysine 14 bears the N6,N6,N6-trimethyllysine mark. Substrate contacts are provided by asparagine 123 and threonine 173. Lysine 175 serves as the catalytic Proton acceptor. Substrate is bound at residue lysine 177. Residues lysine 201, aspartate 203, and glutamate 204 each coordinate Mg(2+). Residue lysine 201 is modified to N6-carboxylysine. Histidine 294 (proton acceptor) is an active-site residue. Substrate is bound by residues arginine 295, histidine 327, and serine 379.

The protein belongs to the RuBisCO large chain family. Type I subfamily. As to quaternary structure, heterohexadecamer of 8 large chains and 8 small chains; disulfide-linked. The disulfide link is formed within the large subunit homodimers. Mg(2+) serves as cofactor. In terms of processing, the disulfide bond which can form in the large chain dimeric partners within the hexadecamer appears to be associated with oxidative stress and protein turnover.

It is found in the plastid. It localises to the chloroplast. The enzyme catalyses 2 (2R)-3-phosphoglycerate + 2 H(+) = D-ribulose 1,5-bisphosphate + CO2 + H2O. The catalysed reaction is D-ribulose 1,5-bisphosphate + O2 = 2-phosphoglycolate + (2R)-3-phosphoglycerate + 2 H(+). RuBisCO catalyzes two reactions: the carboxylation of D-ribulose 1,5-bisphosphate, the primary event in carbon dioxide fixation, as well as the oxidative fragmentation of the pentose substrate in the photorespiration process. Both reactions occur simultaneously and in competition at the same active site. The chain is Ribulose bisphosphate carboxylase large chain from Cryptomeria japonica (Japanese cedar).